A 520-amino-acid chain; its full sequence is Eukaryotic translation initiation factor 3 subunit L (520 aa).

The region spanning 278–478 is the PCI domain; it reads FATYYYVGIC…ELDIALENDL (201 aa).

It belongs to the eIF-3 subunit L family. As to quaternary structure, component of the eukaryotic translation initiation factor 3 (eIF-3) complex.

It is found in the cytoplasm. Component of the eukaryotic translation initiation factor 3 (eIF-3) complex, which is involved in protein synthesis of a specialized repertoire of mRNAs and, together with other initiation factors, stimulates binding of mRNA and methionyl-tRNAi to the 40S ribosome. The eIF-3 complex specifically targets and initiates translation of a subset of mRNAs involved in cell proliferation. This chain is Eukaryotic translation initiation factor 3 subunit L, found in Yarrowia lipolytica (strain CLIB 122 / E 150) (Yeast).